The sequence spans 191 residues: Protein GrpE (191 aa).

Polar residues predominate over residues 1-14 (MEDQKQTPSNQTAT). The segment at 1-35 (MEDQKQTPSNQTATPAGDEATSTAAASPETGAPDT) is disordered. Positions 19–35 (EATSTAAASPETGAPDT) are enriched in low complexity.

Belongs to the GrpE family. Homodimer.

It is found in the cytoplasm. Its function is as follows. Participates actively in the response to hyperosmotic and heat shock by preventing the aggregation of stress-denatured proteins, in association with DnaK and GrpE. It is the nucleotide exchange factor for DnaK and may function as a thermosensor. Unfolded proteins bind initially to DnaJ; upon interaction with the DnaJ-bound protein, DnaK hydrolyzes its bound ATP, resulting in the formation of a stable complex. GrpE releases ADP from DnaK; ATP binding to DnaK triggers the release of the substrate protein, thus completing the reaction cycle. Several rounds of ATP-dependent interactions between DnaJ, DnaK and GrpE are required for fully efficient folding. The protein is Protein GrpE of Cupriavidus taiwanensis (strain DSM 17343 / BCRC 17206 / CCUG 44338 / CIP 107171 / LMG 19424 / R1) (Ralstonia taiwanensis (strain LMG 19424)).